We begin with the raw amino-acid sequence, 152 residues long: Transcriptional regulator MraZ (152 aa).

SpoVT-AbrB domains are found at residues 5-52 (AQAI…PLKE) and 81-124 (ATEC…SETE).

This sequence belongs to the MraZ family. As to quaternary structure, forms oligomers.

It localises to the cytoplasm. The protein localises to the nucleoid. The polypeptide is Transcriptional regulator MraZ (Mannheimia succiniciproducens (strain KCTC 0769BP / MBEL55E)).